The sequence spans 629 residues: Chaperone protein HtpG (629 aa).

An a; substrate-binding region spans residues 1–336; it reads MSSTENNGTA…TEDLSLNVSR (336 aa). A b region spans residues 337 to 549; that stretch reads EMVQSSPVMA…KDAIDSQLER (213 aa). The c stretch occupies residues 550–629; sequence MMKMMNTPMP…ELIEAATLTR (80 aa).

It belongs to the heat shock protein 90 family. Homodimer.

It localises to the cytoplasm. Its function is as follows. Molecular chaperone. Has ATPase activity. The polypeptide is Chaperone protein HtpG (Chlorobium chlorochromatii (strain CaD3)).